Reading from the N-terminus, the 181-residue chain is Peptide deformylase (181 aa).

The Fe cation site is built by Cys-99 and His-141. Glu-142 is an active-site residue. Residue His-145 participates in Fe cation binding.

It belongs to the polypeptide deformylase family. It depends on Fe(2+) as a cofactor.

It catalyses the reaction N-terminal N-formyl-L-methionyl-[peptide] + H2O = N-terminal L-methionyl-[peptide] + formate. Removes the formyl group from the N-terminal Met of newly synthesized proteins. Requires at least a dipeptide for an efficient rate of reaction. N-terminal L-methionine is a prerequisite for activity but the enzyme has broad specificity at other positions. The polypeptide is Peptide deformylase (Chlamydia muridarum (strain MoPn / Nigg)).